Here is a 469-residue protein sequence, read N- to C-terminus: MGKGAIKEEESEKKRKTWRWPLATLVVVFLAVAVSSRTNSNVGFFFSDRNSCSCSLQKTGKYKGMIEDCCCDYETVDNLNTEVLNPLLQDLVTTPFFRYYKVKLWCDCPFWPDDGMCRLRDCSVCECPENEFPEPFKKPFVPGLPSDDLKCQEGKPQGAVDRTIDNRAFRGWVETKNPWTHDDDTDSGEMSYVNLQLNPERYTGYTGPSARRIWDSIYSENCPKYSSGETCPEKKVLYKLISGLHSSISMHIAADYLLDESRNQWGQNIELMYDRILRHPDRVRNMYFTYLFVLRAVTKATAYLEQAEYDTGNHAEDLKTQSLIKQLLYSPKLQTACPVPFDEAKLWQGQSGPELKQQIQKQFRNISALMDCVGCEKCRLWGKLQVQGLGTALKILFSVGNQDIGDQTLQLQRNEVIALVNLLNRLSESVKMVHDMSPDVERLMEDQIAKVSAKPARLRRIWDLAVSFW.

An N-terminal signal peptide occupies residues methionine 1 to serine 36. Cystine bridges form between cysteine 52-cysteine 71, cysteine 54-cysteine 69, cysteine 108-cysteine 372, cysteine 117-cysteine 122, cysteine 222-cysteine 231, and cysteine 375-cysteine 378. 3 residues coordinate FAD: arginine 201, threonine 203, and tryptophan 214. Residues serine 242, histidine 245, arginine 275, and arginine 282 each contribute to the FAD site. Asparagine 365 carries N-linked (GlcNAc...) asparagine glycosylation.

The protein belongs to the EROs family. In terms of assembly, may function both as a monomer and a homodimer. The cofactor is FAD. In terms of processing, N-glycosylated.

It is found in the endoplasmic reticulum membrane. Functionally, essential oxidoreductase that oxidizes proteins in the endoplasmic reticulum to produce disulfide bonds. Acts by oxidizing directly PDI isomerase through a direct disulfide exchange. Does not act as a direct oxidant of folding substrate, but relies on PDI to transfer oxidizing equivalent. Does not oxidize all PDI related proteins, suggesting that it can discriminate between PDI and related proteins. Its reoxidation probably involves electron transfer to molecular oxygen via FAD. Acts independently of glutathione. May be responsible for a significant proportion of reactive oxygen species (ROS) in the cell, thereby being a source of oxidative stress. This chain is Endoplasmic reticulum oxidoreductin-1 (AERO1), found in Arabidopsis thaliana (Mouse-ear cress).